Here is a 604-residue protein sequence, read N- to C-terminus: Glutamine--fructose-6-phosphate aminotransferase [isomerizing] (604 aa).

The active-site Nucleophile; for GATase activity is Cys-2. The 217-residue stretch at 2–218 (CGIVGVVGNR…DKELVVLTKD (217 aa)) folds into the Glutamine amidotransferase type-2 domain. 2 SIS domains span residues 284–423 (IVKS…ANGK) and 456–594 (VANL…VDKP). The active-site For Fru-6P isomerization activity is Lys-599.

As to quaternary structure, homodimer.

Its subcellular location is the cytoplasm. It carries out the reaction D-fructose 6-phosphate + L-glutamine = D-glucosamine 6-phosphate + L-glutamate. Functionally, catalyzes the first step in hexosamine metabolism, converting fructose-6P into glucosamine-6P using glutamine as a nitrogen source. The polypeptide is Glutamine--fructose-6-phosphate aminotransferase [isomerizing] (Streptococcus mutans serotype c (strain ATCC 700610 / UA159)).